Here is a 319-residue protein sequence, read N- to C-terminus: Acetyl-coenzyme A carboxylase carboxyl transferase subunit alpha (319 aa).

Positions 36 to 293 (EVERLKTKLE…HDAFLSELDR (258 aa)) constitute a CoA carboxyltransferase C-terminal domain.

This sequence belongs to the AccA family. As to quaternary structure, acetyl-CoA carboxylase is a heterohexamer composed of biotin carboxyl carrier protein (AccB), biotin carboxylase (AccC) and two subunits each of ACCase subunit alpha (AccA) and ACCase subunit beta (AccD).

The protein localises to the cytoplasm. The enzyme catalyses N(6)-carboxybiotinyl-L-lysyl-[protein] + acetyl-CoA = N(6)-biotinyl-L-lysyl-[protein] + malonyl-CoA. It functions in the pathway lipid metabolism; malonyl-CoA biosynthesis; malonyl-CoA from acetyl-CoA: step 1/1. Component of the acetyl coenzyme A carboxylase (ACC) complex. First, biotin carboxylase catalyzes the carboxylation of biotin on its carrier protein (BCCP) and then the CO(2) group is transferred by the carboxyltransferase to acetyl-CoA to form malonyl-CoA. This Dichelobacter nodosus (strain VCS1703A) protein is Acetyl-coenzyme A carboxylase carboxyl transferase subunit alpha.